The following is a 356-amino-acid chain: MNWDDTTDATADERLVGASADREDQAVEAALRPKDLDEFIGQEKVREQLDLVLRAARARGATSDHVLLSGAPGLGKTTLSMIIAAEMGAPIRITSGPAIQHAGDLAAILSSLQEGEVLFLDEIHRMSRPAEEMLYMAMEDFRVDVIVGKGPGATAIPLELPPFTLVGATTRAGLLPPPLRDRFGFTAHMEFYEPHELERVIHRSAGLLDVEIDSRGAAEIAGRSRGTPRIANRLLRRVRDYAQVKADGVITREIAAAALKVYEVDARGLDRLDRGVLEALLKLFGGGPVGLSTLAVAVGEERETVEEVAEPFLVREGLLARTPRGRVATPAAWAHLGLTPPPRATGGNGQGDLFGA.

The large ATPase domain (RuvB-L) stretch occupies residues 4–192 (DDTTDATADE…FGFTAHMEFY (189 aa)). ATP contacts are provided by residues Leu31, Arg32, Gly73, Lys76, Thr77, Thr78, 139 to 141 (EDF), Arg182, Tyr192, and Arg229. Thr77 is a Mg(2+) binding site. Residues 193–263 (EPHELERVIH…IAAAALKVYE (71 aa)) are small ATPAse domain (RuvB-S). Residues 266 to 356 (ARGLDRLDRG…GNGQGDLFGA (91 aa)) form a head domain (RuvB-H) region. DNA-binding residues include Arg302, Arg321, and Arg326.

It belongs to the RuvB family. In terms of assembly, homohexamer. Forms an RuvA(8)-RuvB(12)-Holliday junction (HJ) complex. HJ DNA is sandwiched between 2 RuvA tetramers; dsDNA enters through RuvA and exits via RuvB. An RuvB hexamer assembles on each DNA strand where it exits the tetramer. Each RuvB hexamer is contacted by two RuvA subunits (via domain III) on 2 adjacent RuvB subunits; this complex drives branch migration. In the full resolvosome a probable DNA-RuvA(4)-RuvB(12)-RuvC(2) complex forms which resolves the HJ.

It localises to the cytoplasm. It catalyses the reaction ATP + H2O = ADP + phosphate + H(+). Its function is as follows. The RuvA-RuvB-RuvC complex processes Holliday junction (HJ) DNA during genetic recombination and DNA repair, while the RuvA-RuvB complex plays an important role in the rescue of blocked DNA replication forks via replication fork reversal (RFR). RuvA specifically binds to HJ cruciform DNA, conferring on it an open structure. The RuvB hexamer acts as an ATP-dependent pump, pulling dsDNA into and through the RuvAB complex. RuvB forms 2 homohexamers on either side of HJ DNA bound by 1 or 2 RuvA tetramers; 4 subunits per hexamer contact DNA at a time. Coordinated motions by a converter formed by DNA-disengaged RuvB subunits stimulates ATP hydrolysis and nucleotide exchange. Immobilization of the converter enables RuvB to convert the ATP-contained energy into a lever motion, pulling 2 nucleotides of DNA out of the RuvA tetramer per ATP hydrolyzed, thus driving DNA branch migration. The RuvB motors rotate together with the DNA substrate, which together with the progressing nucleotide cycle form the mechanistic basis for DNA recombination by continuous HJ branch migration. Branch migration allows RuvC to scan DNA until it finds its consensus sequence, where it cleaves and resolves cruciform DNA. The polypeptide is Holliday junction branch migration complex subunit RuvB (Streptomyces avermitilis (strain ATCC 31267 / DSM 46492 / JCM 5070 / NBRC 14893 / NCIMB 12804 / NRRL 8165 / MA-4680)).